A 149-amino-acid chain; its full sequence is Arginine repressor (149 aa).

The protein belongs to the ArgR family.

It is found in the cytoplasm. The protein operates within amino-acid biosynthesis; L-arginine biosynthesis [regulation]. Its function is as follows. Regulates arginine biosynthesis genes. This Bacillus velezensis (strain DSM 23117 / BGSC 10A6 / LMG 26770 / FZB42) (Bacillus amyloliquefaciens subsp. plantarum) protein is Arginine repressor.